Here is a 517-residue protein sequence, read N- to C-terminus: Beta-galactoside alpha-2,6-sialyltransferase 2 (517 aa).

Topologically, residues 1 to 10 (MKPNLKQWKQ) are cytoplasmic. The helical; Signal-anchor for type II membrane protein transmembrane segment at 11-31 (FMLFGICAWGLLFLVIFVYFT) threads the bilayer. Over 32–517 (DSNSVEPVPS…IHCPIKDHIT (486 aa)) the chain is Lumenal. 3 N-linked (GlcNAc...) asparagine glycosylation sites follow: asparagine 201, asparagine 298, and asparagine 328. 3 disulfide bridges follow: cysteine 244–cysteine 510, cysteine 287–cysteine 439, and cysteine 457–cysteine 468.

The protein belongs to the glycosyltransferase 29 family.

Its subcellular location is the golgi apparatus. It localises to the golgi stack membrane. It catalyses the reaction a beta-D-galactoside + CMP-N-acetyl-beta-neuraminate = an N-acetyl-alpha-neuraminyl-(2-&gt;6)-beta-D-galactosyl derivative + CMP + H(+). Transfers sialic acid from the donor of substrate CMP-sialic acid to galactose containing acceptor substrates. In Xenopus tropicalis (Western clawed frog), this protein is Beta-galactoside alpha-2,6-sialyltransferase 2 (st6gal2).